The following is a 1307-amino-acid chain: Light-sensor Protein kinase (1307 aa).

Residues 215-394 form the GAF domain; the sequence is DIELLCDTIV…VFGMQLNLHV (180 aa). Cys320 serves as a coordination point for phytochromobilin. Residues 609–680 enclose the PAS domain; it reads LANEMSRVLE…RLLSLALQGE (72 aa). One can recognise a PAC domain in the interval 683 to 739; it reads QNVEIKLKTFGTQTTERAVILIVNACCSRDASDFVVGVFFVGQDVTEQRMFMDRFTR. A hinge region spans residues 779–1003; sequence DHATGSVERL…WSFSEKFFQW (225 aa). A Protein kinase domain is found at 1004–1307; it reads IQITGSLGSG…DSYPSTEEPS (304 aa). ATP-binding positions include 1010-1018 and Lys1031; that span reads LGSGSSATV. Residue Asp1127 is part of the active site.

This sequence in the N-terminal section; belongs to the phytochrome family. The protein in the C-terminal section; belongs to the protein kinase superfamily. Ser/Thr protein kinase family. In terms of assembly, homodimer. In terms of processing, contains one covalently linked phytochromobilin chromophore.

It is found in the cell membrane. It catalyses the reaction L-seryl-[protein] + ATP = O-phospho-L-seryl-[protein] + ADP + H(+). The catalysed reaction is L-threonyl-[protein] + ATP = O-phospho-L-threonyl-[protein] + ADP + H(+). Regulatory photoreceptor which exists in two forms that are reversibly interconvertible by light: the Pr form that absorbs maximally in the red region of the spectrum and the Pfr form that absorbs maximally in the far-red region. Photoconversion of Pr to Pfr induces an array of morphogenic responses, whereas reconversion of Pfr to Pr cancels the induction of those responses. Pfr controls the expression of a number of nuclear genes including those encoding the small subunit of ribulose-bisphosphate carboxylase, chlorophyll A/B binding protein, protochlorophyllide reductase, rRNA, etc. It also controls the expression of its own gene(s) in a negative feedback fashion. The chain is Light-sensor Protein kinase (PHY1) from Ceratodon purpureus (Fire moss).